A 452-amino-acid chain; its full sequence is Protein EARLY-RESPONSIVE TO DEHYDRATION 7, chloroplastic (452 aa).

A compositionally biased stretch (polar residues) spans 1–18 (MESSGDKQTSSLYPTVDT). The transit peptide at 1-28 (MESSGDKQTSSLYPTVDTSNPEAPINPS) directs the protein to the chloroplast. The segment at 1 to 37 (MESSGDKQTSSLYPTVDTSNPEAPINPSSSSSTNNLY) is disordered. Residues 19–37 (SNPEAPINPSSSSSTNNLY) show a composition bias toward low complexity. The region spanning 258–426 (IATGSGHLIK…AWVAFKIRKA (169 aa)) is the Senescence domain.

The protein resides in the plastid. Its subcellular location is the chloroplast. The protein is Protein EARLY-RESPONSIVE TO DEHYDRATION 7, chloroplastic of Arabidopsis thaliana (Mouse-ear cress).